A 557-amino-acid polypeptide reads, in one-letter code: NAC domain-containing protein 17 (557 aa).

The NAC domain maps to 16-166; it reads SAPGFRFHPT…YYALYKLFKK (151 aa). The DNA-binding element occupies 115-172; it reads VGLKKTLVFYRGRAPSGERTDWVMHEYTMDEDELGRCKNPQEYYALYKLFKKSGAGPK. Residues 526–546 traverse the membrane as a helical segment; it reads FLLLSIVGALCAIFWVLVATV.

Expressed in roots, rosette leaves, cauline leaves, shoot apex, stems and flowers.

It is found in the endoplasmic reticulum membrane. The protein localises to the nucleus. Its function is as follows. Transcriptional activator activated by proteolytic cleavage through regulated intramembrane proteolysis (RIP). Transcriptional activator that acts as a positive regulator of AOX1A during mitochondrial dysfunction. Binds directly to AOX1A promoter. Mediates mitochondrial retrograde signaling. The chain is NAC domain-containing protein 17 from Arabidopsis thaliana (Mouse-ear cress).